Here is a 342-residue protein sequence, read N- to C-terminus: Dihydroorotase (342 aa).

The Zn(2+) site is built by H13 and H15. Substrate contacts are provided by residues 15 to 17 and N41; that span reads HLR. Zn(2+) is bound by residues K98, H135, and H173. K98 carries the post-translational modification N6-carboxylysine. Substrate is bound at residue H135. Residue L218 coordinates substrate. D246 serves as a coordination point for Zn(2+). D246 is an active-site residue. The substrate site is built by H250 and A262.

This sequence belongs to the metallo-dependent hydrolases superfamily. DHOase family. Class II DHOase subfamily. As to quaternary structure, homodimer. Zn(2+) is required as a cofactor.

The enzyme catalyses (S)-dihydroorotate + H2O = N-carbamoyl-L-aspartate + H(+). Its pathway is pyrimidine metabolism; UMP biosynthesis via de novo pathway; (S)-dihydroorotate from bicarbonate: step 3/3. In terms of biological role, catalyzes the reversible cyclization of carbamoyl aspartate to dihydroorotate. This is Dihydroorotase from Vibrio atlanticus (strain LGP32) (Vibrio splendidus (strain Mel32)).